A 298-amino-acid polypeptide reads, in one-letter code: Protein transport protein SEC13-1 (298 aa).

6 WD repeats span residues 7 to 46 (AHNDLIHDAVLDYYGKKLATCSSDKTIKIFEVEGESHKLV), 51 to 92 (GHEG…WSQI), 97 to 138 (VHTA…TATP), 143 to 196 (AHAI…QSYL), 203 to 245 (GHSD…GPWV), and 253 to 292 (EFPDVLWRASWSLSGNILAISGGDNKVTLWKENLNGKWES).

This sequence belongs to the WD repeat SEC13 family. The COPII coat is composed of at least 5 proteins: the SEC23/24 complex, the SEC13/31 complex, and the protein SAR1. Component of the nuclear pore complex (NPC). NPC constitutes the exclusive means of nucleocytoplasmic transport. NPCs allow the passive diffusion of ions and small molecules and the active, nuclear transport receptor-mediated bidirectional transport of macromolecules such as proteins, RNAs, ribonucleoparticles (RNPs), and ribosomal subunits across the nuclear envelope. Due to its 8-fold rotational symmetry, all subunits are present with 8 copies or multiples thereof.

Its subcellular location is the cytoplasmic vesicle. It is found in the COPII-coated vesicle membrane. It localises to the endoplasmic reticulum membrane. The protein resides in the nucleus. The protein localises to the nuclear pore complex. In terms of biological role, component of the coat protein complex II (COPII) which promotes the formation of transport vesicles from the endoplasmic reticulum (ER). The coat has two main functions, the physical deformation of the endoplasmic reticulum membrane into vesicles and the selection of cargo molecules. It also functions as a component of the nuclear pore complex (NPC). NPC components, collectively referred to as nucleoporins (NUPs), can play the role of both NPC structural components and of docking or interaction partners for transiently associated nuclear transport factors. SEC13 is required for efficient mRNA export from the nucleus to the cytoplasm and for correct nuclear pore biogenesis and distribution. This Candida glabrata (strain ATCC 2001 / BCRC 20586 / JCM 3761 / NBRC 0622 / NRRL Y-65 / CBS 138) (Yeast) protein is Protein transport protein SEC13-1 (SEC131).